Reading from the N-terminus, the 355-residue chain is Phosphoribosylformylglycinamidine cyclo-ligase (355 aa).

The protein belongs to the AIR synthase family.

It localises to the cytoplasm. The catalysed reaction is 2-formamido-N(1)-(5-O-phospho-beta-D-ribosyl)acetamidine + ATP = 5-amino-1-(5-phospho-beta-D-ribosyl)imidazole + ADP + phosphate + H(+). It participates in purine metabolism; IMP biosynthesis via de novo pathway; 5-amino-1-(5-phospho-D-ribosyl)imidazole from N(2)-formyl-N(1)-(5-phospho-D-ribosyl)glycinamide: step 2/2. In Beijerinckia indica subsp. indica (strain ATCC 9039 / DSM 1715 / NCIMB 8712), this protein is Phosphoribosylformylglycinamidine cyclo-ligase.